Here is a 524-residue protein sequence, read N- to C-terminus: Homeobox protein engrailed-like SMOX-2 (524 aa).

The tract at residues 194–218 (SSSSSSSSSSSSSSSSSSCSTNSSS) is disordered. The homeobox DNA-binding region spans 423–482 (LKRPRTSFTVPQLKRLSQEFEKNRYLDELRRKKLATELDLRESQVKIWFQNKRAKTKKAS).

It belongs to the engrailed homeobox family.

It localises to the nucleus. This is Homeobox protein engrailed-like SMOX-2 (SMOX-2) from Schistosoma mansoni (Blood fluke).